A 179-amino-acid polypeptide reads, in one-letter code: Large ribosomal subunit protein uL6 (179 aa).

The protein belongs to the universal ribosomal protein uL6 family. Part of the 50S ribosomal subunit.

This protein binds to the 23S rRNA, and is important in its secondary structure. It is located near the subunit interface in the base of the L7/L12 stalk, and near the tRNA binding site of the peptidyltransferase center. In Beutenbergia cavernae (strain ATCC BAA-8 / DSM 12333 / CCUG 43141 / JCM 11478 / NBRC 16432 / NCIMB 13614 / HKI 0122), this protein is Large ribosomal subunit protein uL6.